The chain runs to 80 residues: SPI-1 type 3 secretion system needle filament protein (80 aa).

This sequence belongs to the SctF family. The core secretion machinery of the T3SS is composed of approximately 20 different proteins, including cytoplasmic components, a base, an export apparatus and a needle. This subunit polymerizes and forms the helical needle filament. Interacts with the needle tip protein SipD/SctA. Interacts with the needle adapter protein PrgJ/SctI, the secretin InvG/SctC and the minor export apparatus protein SpaP/SctR. In vitro, the needle protomer refolds spontaneously to extend the needle from the distal end.

It is found in the secreted. Its subcellular location is the cell surface. With respect to regulation, binding of bile salts, including deoxycholate, to the PrgI:SipD interface may inhibit the T3SS function. Its function is as follows. Component of the type III secretion system (T3SS), also called injectisome, which is used to inject bacterial effector proteins into eukaryotic host cells. PrgI/SctF1 forms the external needle filament that protrudes from the bacterial surface. Is probably involved in the transduction of an activating signal, thought to be mediated by the distal tip of the needle filament, to the secretion machine. Required for invasion of epithelial cells. Required for the secretion of the effector protein SptP. Functionally, during infection, can induce innate immune responses. The needle proteins interact with host TLR2 or TLR4, and induce signaling by NF-kappa-B and/or AP-1. This activation is MyD88 dependent and results in increased expression of cytokines, including TNF-alpha, IL-6 and IL-8. The protein is SPI-1 type 3 secretion system needle filament protein of Salmonella typhimurium (strain LT2 / SGSC1412 / ATCC 700720).